Consider the following 123-residue polypeptide: Small ribosomal subunit protein uS12 (123 aa).

Aspartate 89 carries the 3-methylthioaspartic acid modification. The interval 100 to 123 (GSLDTSGVSDRKQGRSKYGTKRPK) is disordered. A compositionally biased stretch (basic residues) spans 113 to 123 (GRSKYGTKRPK).

It belongs to the universal ribosomal protein uS12 family. As to quaternary structure, part of the 30S ribosomal subunit. Contacts proteins S8 and S17. May interact with IF1 in the 30S initiation complex.

Its function is as follows. With S4 and S5 plays an important role in translational accuracy. Interacts with and stabilizes bases of the 16S rRNA that are involved in tRNA selection in the A site and with the mRNA backbone. Located at the interface of the 30S and 50S subunits, it traverses the body of the 30S subunit contacting proteins on the other side and probably holding the rRNA structure together. The combined cluster of proteins S8, S12 and S17 appears to hold together the shoulder and platform of the 30S subunit. The chain is Small ribosomal subunit protein uS12 from Saccharophagus degradans (strain 2-40 / ATCC 43961 / DSM 17024).